Here is an 834-residue protein sequence, read N- to C-terminus: Inner nuclear membrane protein SRC1 (834 aa).

Residues 68–292 (DEGIVKMDRP…TANGTGHSTP (225 aa)) form a disordered region. The span at 77-86 (PSSSPSIASP) shows a compositional bias: low complexity. Residues serine 78, serine 80, and serine 85 each carry the phosphoserine modification. Composition is skewed to acidic residues over residues 114-127 (VSND…DDDD) and 142-153 (DTDEVDDEEDDV). Residues 154–170 (ITSSSNKSDTNDFQQNS) show a composition bias toward polar residues. Serine 181 is subject to Phosphoserine. Residues 188-198 (NSKENKIDNKH) show a composition bias toward basic and acidic residues. Phosphoserine occurs at positions 203, 204, and 206. Positions 243–266 (IKNTNRKPVSMDNFNDSLTSSGTE) are enriched in polar residues. Residue serine 301 is modified to Phosphoserine. Residues 307–364 (PQKEVPSTILVPEVEQQEPSQSERTPSLFSSEGSGSESEAPLLPEITTPGPHQPMGNT) are disordered. Low complexity-rich tracts occupy residues 317-329 (VPEV…SQSE) and 336-345 (SSEGSGSESE). Threonine 394 is modified (phosphothreonine). A Phosphoserine modification is found at serine 427. 2 consecutive transmembrane segments (helical) span residues 455 to 475 (LLAL…GLWY) and 708 to 728 (IWLM…LKNY).

Its subcellular location is the nucleus inner membrane. In terms of biological role, plays a role in sister chromatid separation. This chain is Inner nuclear membrane protein SRC1 (SRC1), found in Saccharomyces cerevisiae (strain ATCC 204508 / S288c) (Baker's yeast).